The sequence spans 282 residues: Protoheme IX farnesyltransferase (282 aa).

Transmembrane regions (helical) follow at residues 9–29, 39–59, 79–99, 102–122, 139–159, 165–185, 210–230, 231–251, and 261–281; these read LAKP…FLLA, LPLF…GCVF, LVTG…LLIL, LVLY…GFIV, VLGG…VVNI, LALF…IAML, IMLF…VLGS, ADLF…YKSI, and VFAK…CLTM.

The protein belongs to the UbiA prenyltransferase family. Protoheme IX farnesyltransferase subfamily.

It is found in the cell inner membrane. It carries out the reaction heme b + (2E,6E)-farnesyl diphosphate + H2O = Fe(II)-heme o + diphosphate. It participates in porphyrin-containing compound metabolism; heme O biosynthesis; heme O from protoheme: step 1/1. Its function is as follows. Converts heme B (protoheme IX) to heme O by substitution of the vinyl group on carbon 2 of heme B porphyrin ring with a hydroxyethyl farnesyl side group. The protein is Protoheme IX farnesyltransferase of Francisella tularensis subsp. holarctica (strain LVS).